A 261-amino-acid polypeptide reads, in one-letter code: Cytochrome c oxidase subunit 3 (261 aa).

Residues 1–15 are Mitochondrial matrix-facing; sequence MAHQAHAYHMVDPSP. Residues 16–34 form a helical membrane-spanning segment; that stretch reads WPLTGAIAALLLTSGTAVW. Topologically, residues 35–40 are mitochondrial intermembrane; that stretch reads FHFHSL. The chain crosses the membrane as a helical span at residues 41–66; it reads TLLTLGNILLLLTMYQWWRDIIREGT. Over 67–72 the chain is Mitochondrial matrix; the sequence is FQGHHT. The helical transmembrane segment at 73-105 threads the bilayer; that stretch reads PPVQKGLRYGMILFITSEVFFFLGFFWAFYHAS. Over 106–128 the chain is Mitochondrial intermembrane; the sequence is LAPTPELGGCWPPTGITTLDPFE. Residues 129–152 traverse the membrane as a helical segment; it reads VPLLNTAVLLASGVTVTWAHHSIM. The Mitochondrial matrix segment spans residues 153–155; that stretch reads EGE. Residues 156–183 form a helical membrane-spanning segment; the sequence is RKQTIQALTLTILLGFYFTFLQGMEYYE. The Mitochondrial intermembrane portion of the chain corresponds to 184-190; sequence APFTIAD. A helical membrane pass occupies residues 191 to 223; that stretch reads GVYGSTFFVATGFHGLHVIIGSTFLAVCLLRQV. At 224 to 232 the chain is on the mitochondrial matrix side; that stretch reads QYHFTSEHH. The helical transmembrane segment at 233-256 threads the bilayer; it reads FGFEAAAWYWHFVDVVWLFLYVSI. The Mitochondrial intermembrane segment spans residues 257 to 261; the sequence is YWWGS.

This sequence belongs to the cytochrome c oxidase subunit 3 family. As to quaternary structure, component of the cytochrome c oxidase (complex IV, CIV), a multisubunit enzyme composed of 14 subunits. The complex is composed of a catalytic core of 3 subunits MT-CO1, MT-CO2 and MT-CO3, encoded in the mitochondrial DNA, and 11 supernumerary subunits COX4I, COX5A, COX5B, COX6A, COX6B, COX6C, COX7A, COX7B, COX7C, COX8 and NDUFA4, which are encoded in the nuclear genome. The complex exists as a monomer or a dimer and forms supercomplexes (SCs) in the inner mitochondrial membrane with NADH-ubiquinone oxidoreductase (complex I, CI) and ubiquinol-cytochrome c oxidoreductase (cytochrome b-c1 complex, complex III, CIII), resulting in different assemblies (supercomplex SCI(1)III(2)IV(1) and megacomplex MCI(2)III(2)IV(2)).

Its subcellular location is the mitochondrion inner membrane. The enzyme catalyses 4 Fe(II)-[cytochrome c] + O2 + 8 H(+)(in) = 4 Fe(III)-[cytochrome c] + 2 H2O + 4 H(+)(out). Functionally, component of the cytochrome c oxidase, the last enzyme in the mitochondrial electron transport chain which drives oxidative phosphorylation. The respiratory chain contains 3 multisubunit complexes succinate dehydrogenase (complex II, CII), ubiquinol-cytochrome c oxidoreductase (cytochrome b-c1 complex, complex III, CIII) and cytochrome c oxidase (complex IV, CIV), that cooperate to transfer electrons derived from NADH and succinate to molecular oxygen, creating an electrochemical gradient over the inner membrane that drives transmembrane transport and the ATP synthase. Cytochrome c oxidase is the component of the respiratory chain that catalyzes the reduction of oxygen to water. Electrons originating from reduced cytochrome c in the intermembrane space (IMS) are transferred via the dinuclear copper A center (CU(A)) of subunit 2 and heme A of subunit 1 to the active site in subunit 1, a binuclear center (BNC) formed by heme A3 and copper B (CU(B)). The BNC reduces molecular oxygen to 2 water molecules using 4 electrons from cytochrome c in the IMS and 4 protons from the mitochondrial matrix. In Oncorhynchus clarkii (Cutthroat trout), this protein is Cytochrome c oxidase subunit 3 (mt-co3).